The chain runs to 459 residues: NADH oxidase (459 aa).

N10 is a binding site for FAD. The active-site Proton acceptor is H11. FAD is bound by residues A12, D34, Q35, C44, V81, A110, S113, K143, and Y172. C44 functions as the Redox-active in the catalytic mechanism. At C44 the chain carries Cysteine sulfinic acid (-SO2H). Residues I173, D192, Y201, and G256 each coordinate NAD(+). D294 provides a ligand contact to FAD. A310 provides a ligand contact to NAD(+). The FAD site is built by L311, A312, and S313. An NAD(+)-binding site is contributed by G341. F439 lines the FAD pocket.

This sequence belongs to the class-III pyridine nucleotide-disulfide oxidoreductase family. FAD serves as cofactor.

The protein localises to the secreted. Its subcellular location is the cell wall. It catalyses the reaction 2 NADH + O2 + 2 H(+) = 2 NAD(+) + 2 H2O. Its function is as follows. Catalyzes the four-electron reduction of molecular oxygen to water. Plays a role in redox balance maintenance. May be involved in mediating bacterial adhesion to host cells. May be considered a potential virulence factor. The protein is NADH oxidase of Streptococcus pneumoniae serotype 4 (strain ATCC BAA-334 / TIGR4).